A 232-amino-acid polypeptide reads, in one-letter code: Phosphatidylserine decarboxylase proenzyme (232 aa).

The active-site Schiff-base intermediate with substrate; via pyruvic acid is the Ser190. Ser190 is modified (pyruvic acid (Ser); by autocatalysis).

This sequence belongs to the phosphatidylserine decarboxylase family. PSD-A subfamily. Heterodimer of a large membrane-associated beta subunit and a small pyruvoyl-containing alpha subunit. It depends on pyruvate as a cofactor. Post-translationally, is synthesized initially as an inactive proenzyme. Formation of the active enzyme involves a self-maturation process in which the active site pyruvoyl group is generated from an internal serine residue via an autocatalytic post-translational modification. Two non-identical subunits are generated from the proenzyme in this reaction, and the pyruvate is formed at the N-terminus of the alpha chain, which is derived from the carboxyl end of the proenzyme. The post-translation cleavage follows an unusual pathway, termed non-hydrolytic serinolysis, in which the side chain hydroxyl group of the serine supplies its oxygen atom to form the C-terminus of the beta chain, while the remainder of the serine residue undergoes an oxidative deamination to produce ammonia and the pyruvoyl prosthetic group on the alpha chain.

The protein resides in the cell membrane. The enzyme catalyses a 1,2-diacyl-sn-glycero-3-phospho-L-serine + H(+) = a 1,2-diacyl-sn-glycero-3-phosphoethanolamine + CO2. Its pathway is phospholipid metabolism; phosphatidylethanolamine biosynthesis; phosphatidylethanolamine from CDP-diacylglycerol: step 2/2. Its function is as follows. Catalyzes the formation of phosphatidylethanolamine (PtdEtn) from phosphatidylserine (PtdSer). Important for establishment of root nodule symbiosis with the host plant. In Rhizobium meliloti (strain 1021) (Ensifer meliloti), this protein is Phosphatidylserine decarboxylase proenzyme.